We begin with the raw amino-acid sequence, 215 residues long: 3,4-dihydroxy-2-butanone 4-phosphate synthase (215 aa).

D-ribulose 5-phosphate contacts are provided by residues 38–39 (RE), D43, 151–155 (RRGHT), and E175. E39 lines the Mg(2+) pocket. H154 is a binding site for Mg(2+).

It belongs to the DHBP synthase family. Homodimer. Mg(2+) is required as a cofactor. Requires Mn(2+) as cofactor.

The catalysed reaction is D-ribulose 5-phosphate = (2S)-2-hydroxy-3-oxobutyl phosphate + formate + H(+). The protein operates within cofactor biosynthesis; riboflavin biosynthesis; 2-hydroxy-3-oxobutyl phosphate from D-ribulose 5-phosphate: step 1/1. Functionally, catalyzes the conversion of D-ribulose 5-phosphate to formate and 3,4-dihydroxy-2-butanone 4-phosphate. The protein is 3,4-dihydroxy-2-butanone 4-phosphate synthase of Haemophilus influenzae (strain PittGG).